We begin with the raw amino-acid sequence, 160 residues long: uncharacterized protein (160 aa).

Positions 2–140 (MIIIPNNEIA…KARRLKPEIP (139 aa)) constitute an N-acetyltransferase domain.

This is an uncharacterized protein from Bacillus subtilis (strain 168).